The primary structure comprises 611 residues: L-tyrosine decarboxylase (611 aa).

Residues 151–152 (GS), Thr292, and 382–384 (DPH) each bind pyridoxal 5'-phosphate. Lys385 bears the N6-(pyridoxal phosphate)lysine mark. Tyr413 functions as the Proton donor in the catalytic mechanism. Residue Ser433 coordinates pyridoxal 5'-phosphate.

The protein belongs to the group II decarboxylase family. Tyrosine decarboxylase subfamily. As to quaternary structure, homodimer. Pyridoxal 5'-phosphate serves as cofactor.

It catalyses the reaction L-tyrosine + H(+) = tyramine + CO2. The catalysed reaction is L-dopa + H(+) = dopamine + CO2. The protein operates within amino-acid metabolism. With respect to regulation, levodopa decarboxylation is not inhibited by carbidopa, benserazide, and methyldopa, that are three human L-dopa decarboxylase inhibitors. In terms of biological role, catalyzes the decarboxylation of L-tyrosine to produce tyramine. Plays a role in acid resistance since tyramine production via tyrosine decarboxylation appears to provide a cytosolic pH maintenance mechanism that helps the bacterium cope with acid stress such as that encountered in gastrointestinal tract (GIT) environments. Therefore, may contribute to the colonization of the human GIT by E.faecium. Also involved in drug metabolism, being able to catalyze decarboxylation of levodopa (L-dopa) to dopamine. In gut microbiota this enzyme is in fact exclusively responsible for the decarboxylation of levodopa, and thus reduces in situ levels of levodopa in the treatment of Parkinson's disease. It was shown that abundance of bacterial tyrosine decarboxylase in the proximal small intestine - the primary site of levodopa absorption - contributes to interindividual variation in drug efficacy and can explain the requirement for an increased dosage regimen of levodopa treatment in Parkinson's disease patients. The protein is L-tyrosine decarboxylase of Enterococcus faecium (Streptococcus faecium).